Reading from the N-terminus, the 43-residue chain is Protein PsbN (43 aa).

A helical membrane pass occupies residues 5 to 27 (TLVAISISGLLVSFTGYALYTAF).

The protein belongs to the PsbN family.

It localises to the plastid. The protein resides in the chloroplast thylakoid membrane. Its function is as follows. May play a role in photosystem I and II biogenesis. This chain is Protein PsbN, found in Coelogyne cristata (Orchid).